The sequence spans 513 residues: GMP synthase [glutamine-hydrolyzing] (513 aa).

The 190-residue stretch at 9–198 folds into the Glutamine amidotransferase type-1 domain; the sequence is LILVLDFGSQ…VRRVCDCKGQ (190 aa). Catalysis depends on C86, which acts as the Nucleophile. Active-site residues include H172 and E174. The GMPS ATP-PPase domain occupies 199–388; that stretch reads WTMENFIEIE…LGIPEHLVWR (190 aa). 226–232 contacts ATP; that stretch reads SGGVDSS.

Homodimer.

The catalysed reaction is XMP + L-glutamine + ATP + H2O = GMP + L-glutamate + AMP + diphosphate + 2 H(+). It participates in purine metabolism; GMP biosynthesis; GMP from XMP (L-Gln route): step 1/1. Catalyzes the synthesis of GMP from XMP. In Staphylococcus aureus (strain Mu3 / ATCC 700698), this protein is GMP synthase [glutamine-hydrolyzing].